A 312-amino-acid polypeptide reads, in one-letter code: Cytochrome f (312 aa).

A signal peptide spans methionine 1–alanine 30. Tyrosine 31, cysteine 51, cysteine 54, and histidine 55 together coordinate heme. A helical membrane pass occupies residues valine 278–lysine 298.

It belongs to the cytochrome f family. In terms of assembly, the 4 large subunits of the cytochrome b6-f complex are cytochrome b6, subunit IV (17 kDa polypeptide, petD), cytochrome f and the Rieske protein, while the 4 small subunits are PetG, PetL, PetM and PetN. The complex functions as a dimer. Heme serves as cofactor.

It localises to the plastid. The protein resides in the chloroplast thylakoid membrane. In terms of biological role, component of the cytochrome b6-f complex, which mediates electron transfer between photosystem II (PSII) and photosystem I (PSI), cyclic electron flow around PSI, and state transitions. The sequence is that of Cytochrome f (petA) from Bigelowiella natans (Pedinomonas minutissima).